Reading from the N-terminus, the 260-residue chain is Resolvase (260 aa).

Positions 38–241 constitute a Tyr recombinase domain; the sequence is ELPKYLLAPE…FALDVAARHR (204 aa). Active-site residues include Arg73, Lys105, His193, Arg196, and His219. Catalysis depends on Tyr228, which acts as the O-(3'-phospho-DNA)-tyrosine intermediate.

It belongs to the 'phage' integrase family.

In terms of biological role, this resolvase acts at the RfsF equivalent resolution sequence of pColBM-CL139. This is Resolvase (resD) from Escherichia coli.